Here is a 320-residue protein sequence, read N- to C-terminus: ATP-dependent 6-phosphofructokinase (320 aa).

Residue G12 coordinates ATP. Residue 22–26 (RGVVR) participates in ADP binding. Residues 73 to 74 (RF) and 103 to 106 (GDGS) each bind ATP. A Mg(2+)-binding site is contributed by D104. Position 126-128 (126-128 (TID)) interacts with substrate. The active-site Proton acceptor is D128. Residue R155 participates in ADP binding. Substrate is bound by residues R163 and 170–172 (MGR). Residues 186–188 (GCE), K212, and 214–216 (KKH) contribute to the ADP site. Substrate-binding positions include E223, R244, and 250 to 253 (HIQR).

Belongs to the phosphofructokinase type A (PFKA) family. ATP-dependent PFK group I subfamily. Prokaryotic clade 'B1' sub-subfamily. Homotetramer. Mg(2+) is required as a cofactor.

Its subcellular location is the cytoplasm. The enzyme catalyses beta-D-fructose 6-phosphate + ATP = beta-D-fructose 1,6-bisphosphate + ADP + H(+). It functions in the pathway carbohydrate degradation; glycolysis; D-glyceraldehyde 3-phosphate and glycerone phosphate from D-glucose: step 3/4. With respect to regulation, allosterically activated by ADP and other diphosphonucleosides, and allosterically inhibited by phosphoenolpyruvate. In terms of biological role, catalyzes the phosphorylation of D-fructose 6-phosphate to fructose 1,6-bisphosphate by ATP, the first committing step of glycolysis. This is ATP-dependent 6-phosphofructokinase from Aliivibrio fischeri (strain ATCC 700601 / ES114) (Vibrio fischeri).